The primary structure comprises 478 residues: WD repeat-containing protein AAC3 (478 aa).

Disordered regions lie at residues 33–53 (HPLF…QQQQ) and 106–140 (SQIH…QYTN). A compositionally biased stretch (low complexity) spans 106-125 (SQIHQQSQQSQLSNNLNSNS). The span at 126-140 (KESTNIPKTNTQYTN) shows a compositional bias: polar residues. 7 WD repeats span residues 163-202 (GNKK…NSNN), 226-268 (GHDG…GTVS), 270-307 (NSEN…TLKI), 310-349 (FNGE…TTHV), 357-396 (GHTA…CVKT), 399-438 (KSTF…PIHT), and 440-478 (ECSG…GYHS).

It belongs to the THOC3 family.

This is WD repeat-containing protein AAC3 (AAC3) from Dictyostelium discoideum (Social amoeba).